We begin with the raw amino-acid sequence, 232 residues long: 2-C-methyl-D-erythritol 4-phosphate cytidylyltransferase (232 aa).

The protein belongs to the IspD/TarI cytidylyltransferase family. IspD subfamily.

It catalyses the reaction 2-C-methyl-D-erythritol 4-phosphate + CTP + H(+) = 4-CDP-2-C-methyl-D-erythritol + diphosphate. It functions in the pathway isoprenoid biosynthesis; isopentenyl diphosphate biosynthesis via DXP pathway; isopentenyl diphosphate from 1-deoxy-D-xylulose 5-phosphate: step 2/6. Its function is as follows. Catalyzes the formation of 4-diphosphocytidyl-2-C-methyl-D-erythritol from CTP and 2-C-methyl-D-erythritol 4-phosphate (MEP). In Stenotrophomonas maltophilia (strain R551-3), this protein is 2-C-methyl-D-erythritol 4-phosphate cytidylyltransferase.